Reading from the N-terminus, the 103-residue chain is Small ribosomal subunit protein uS10 (103 aa).

It belongs to the universal ribosomal protein uS10 family. Part of the 30S ribosomal subunit.

Functionally, involved in the binding of tRNA to the ribosomes. This chain is Small ribosomal subunit protein uS10, found in Polynucleobacter asymbioticus (strain DSM 18221 / CIP 109841 / QLW-P1DMWA-1) (Polynucleobacter necessarius subsp. asymbioticus).